A 547-amino-acid polypeptide reads, in one-letter code: Glucose-6-phosphate isomerase (547 aa).

The active-site Proton donor is the Glu352. Catalysis depends on residues His383 and Lys511.

This sequence belongs to the GPI family.

The protein resides in the cytoplasm. The catalysed reaction is alpha-D-glucose 6-phosphate = beta-D-fructose 6-phosphate. The protein operates within carbohydrate biosynthesis; gluconeogenesis. It functions in the pathway carbohydrate degradation; glycolysis; D-glyceraldehyde 3-phosphate and glycerone phosphate from D-glucose: step 2/4. Its function is as follows. Catalyzes the reversible isomerization of glucose-6-phosphate to fructose-6-phosphate. The protein is Glucose-6-phosphate isomerase of Rhodospirillum rubrum (strain ATCC 11170 / ATH 1.1.1 / DSM 467 / LMG 4362 / NCIMB 8255 / S1).